The chain runs to 117 residues: Immunoglobulin heavy variable 1-69-2 (117 aa).

A signal peptide spans 1 to 19 (MDCTWRILLLVAAATGTHA). A framework-1 region spans residues 20–44 (EVQLVQSGAEVKKPGATVKISCKVS). One can recognise an Ig-like domain in the interval 20–117 (EVQLVQSGAE…EDTAVYYCAT (98 aa)). Cysteines 41 and 115 form a disulfide. A complementarity-determining-1 region spans residues 45–52 (GYTFTDYY). A framework-2 region spans residues 53–69 (MHWVQQAPGKGLEWMGL). The complementarity-determining-2 stretch occupies residues 70-77 (VDPEDGET). Positions 78–115 (IYAEKFQGRVTITADTSTDTAYMELSSLRSEDTAVYYC) are framework-3. Residues 116 to 117 (AT) form a complementarity-determining-3 region.

Immunoglobulins are composed of two identical heavy chains and two identical light chains; disulfide-linked.

The protein resides in the secreted. The protein localises to the cell membrane. Its function is as follows. V region of the variable domain of immunoglobulin heavy chains that participates in the antigen recognition. Immunoglobulins, also known as antibodies, are membrane-bound or secreted glycoproteins produced by B lymphocytes. In the recognition phase of humoral immunity, the membrane-bound immunoglobulins serve as receptors which, upon binding of a specific antigen, trigger the clonal expansion and differentiation of B lymphocytes into immunoglobulins-secreting plasma cells. Secreted immunoglobulins mediate the effector phase of humoral immunity, which results in the elimination of bound antigens. The antigen binding site is formed by the variable domain of one heavy chain, together with that of its associated light chain. Thus, each immunoglobulin has two antigen binding sites with remarkable affinity for a particular antigen. The variable domains are assembled by a process called V-(D)-J rearrangement and can then be subjected to somatic hypermutations which, after exposure to antigen and selection, allow affinity maturation for a particular antigen. The polypeptide is Immunoglobulin heavy variable 1-69-2 (Homo sapiens (Human)).